The chain runs to 438 residues: Serine hydroxymethyltransferase (438 aa).

Residues Leu-133 and 137-139 (GHL) each bind (6S)-5,6,7,8-tetrahydrofolate. At Lys-242 the chain carries N6-(pyridoxal phosphate)lysine.

This sequence belongs to the SHMT family. In terms of assembly, homodimer. Pyridoxal 5'-phosphate serves as cofactor.

It localises to the cytoplasm. It carries out the reaction (6R)-5,10-methylene-5,6,7,8-tetrahydrofolate + glycine + H2O = (6S)-5,6,7,8-tetrahydrofolate + L-serine. It participates in one-carbon metabolism; tetrahydrofolate interconversion. Its pathway is amino-acid biosynthesis; glycine biosynthesis; glycine from L-serine: step 1/1. Catalyzes the reversible interconversion of serine and glycine with tetrahydrofolate (THF) serving as the one-carbon carrier. This reaction serves as the major source of one-carbon groups required for the biosynthesis of purines, thymidylate, methionine, and other important biomolecules. Also exhibits THF-independent aldolase activity toward beta-hydroxyamino acids, producing glycine and aldehydes, via a retro-aldol mechanism. The chain is Serine hydroxymethyltransferase from Brucella ovis (strain ATCC 25840 / 63/290 / NCTC 10512).